Here is a 789-residue protein sequence, read N- to C-terminus: Tax1-binding protein 1 (789 aa).

Phosphoserine is present on residues Ser-124, Ser-138, and Ser-225. A coiled-coil region spans residues Thr-144–Glu-599. Positions Glu-320–Asp-420 are oligomerization. A compositionally biased stretch (polar residues) spans Thr-481 to Thr-502. Positions Thr-481 to Ser-508 are disordered. A Phosphoserine; by IKKA modification is found at Ser-593. Residue Ser-609 is modified to Phosphoserine. A disordered region spans residues Tyr-639 to Pro-660. Position 666 is a phosphoserine; by IKKA (Ser-666). The segment at Pro-678–Arg-712 is disordered. UBZ1-type zinc fingers lie at residues His-727–His-753 and Trp-754–His-780. Zn(2+) contacts are provided by Cys-730, Cys-733, His-749, His-753, Cys-757, Cys-760, His-776, and His-780.

In terms of assembly, homooligomer. Interacts with TNFAIP3. Interacts with STARD13. Interacts with MYO6. Interacts with TOM1; the interaction is indirect and is mediated by MYO6, which acts as a bridge between TOM1 and TAX1BP1. Interacts with MAVS; this interaction induces MAVS polyubiquitination. Interacts with TNIP1. Interacts with TRAF6; this interaction mediates deubiquitination of TRAF6 and inhibition of NF-kappa-B activation. Interacts with RIPK1; this interaction negatively regulates RIPK1 ubiquitination. Interacts with NBR1. Interacts with TBK1. Interacts with RB1CC1. Interacts with SQSTM1. Interacts with AZI2. Interacts with TICAM1 and TRIM32; these interactions target TICAM1 to TAX1BP1-mediated selective autophagic degradation. As to quaternary structure, (Microbial infection) Interacts with the HTLV-1 protein Tax. (Microbial infection) Interacts with Respiratory syncytial virus protein N; this interaction may promote viral growth by inhibiting the innate immune response. In terms of assembly, (Microbial infection) Interacts with Lassa virus protein Z. As to quaternary structure, (Microbial infection) Interacts with Mopeia virus protein Z. In terms of processing, phosphorylated in the C-terminal region by CHUK/IKKA leading to NF-kappa-B signaling down-regulation. As to expression, expressed in all tissues tested.

The protein localises to the cytoplasm. Its subcellular location is the mitochondrion. It is found in the preautophagosomal structure. The protein resides in the cytoplasmic vesicle. It localises to the autophagosome. In terms of biological role, ubiquitin-binding adapter that participates in inflammatory, antiviral and innate immune processes as well as selective autophagy regulation. Plays a key role in the negative regulation of NF-kappa-B and IRF3 signalings by acting as an adapter for the ubiquitin-editing enzyme A20/TNFAIP3 to bind and inactivate its substrates. Disrupts the interactions between the E3 ubiquitin ligase TRAF3 and TBK1/IKBKE to attenuate 'Lys63'-linked polyubiquitination of TBK1 and thereby IFN-beta production. Also recruits A20/TNFAIP3 to ubiquitinated signaling proteins TRAF6 and RIPK1, leading to their deubiquitination and disruption of IL-1 and TNF-induced NF-kappa-B signaling pathways. Inhibits virus-induced apoptosis by inducing the 'Lys-48'-linked polyubiquitination and degradation of MAVS via recruitment of the E3 ligase ITCH, thereby attenuating MAVS-mediated apoptosis signaling. As a macroautophagy/autophagy receptor, facilitates the xenophagic clearance of pathogenic bacteria such as Salmonella typhimurium and Mycobacterium tuberculosis. Upon NBR1 recruitment to the SQSTM1-ubiquitin condensates, acts as the major recruiter of RB1CC1 to these ubiquitin condensates to promote their autophagic degradation. Mediates the autophagic degradation of other substrates including TICAM1. This chain is Tax1-binding protein 1 (TAX1BP1), found in Homo sapiens (Human).